The following is a 393-amino-acid chain: Lipid-A-disaccharide synthase (393 aa).

It belongs to the LpxB family.

It carries out the reaction a lipid X + a UDP-2-N,3-O-bis[(3R)-3-hydroxyacyl]-alpha-D-glucosamine = a lipid A disaccharide + UDP + H(+). Its pathway is bacterial outer membrane biogenesis; LPS lipid A biosynthesis. Condensation of UDP-2,3-diacylglucosamine and 2,3-diacylglucosamine-1-phosphate to form lipid A disaccharide, a precursor of lipid A, a phosphorylated glycolipid that anchors the lipopolysaccharide to the outer membrane of the cell. The chain is Lipid-A-disaccharide synthase from Bordetella petrii (strain ATCC BAA-461 / DSM 12804 / CCUG 43448).